The sequence spans 404 residues: MKLPIYLDYAATCPVDERVAEKMMNYLTIDGVFGNPASRSHKFGWQAEEAVDIARNQIADLIGADSREIVFTSGATESDNLAIKGAAHFYQTKGKHIITCKTEHKAVLDTCRQLEREGFEVTYLSPKCDGLIDLDEFKAAIRPDTILASIMHVNNEIGVIQDIRAIGEICRAHKIIFHVDATQSVGKIAINLAELSVDLLSMSGHKLYGPKGVGALYVRRKPRIRLEAIIHGGGHERGMRSGTLPVHQIVGMGEAYRICKEEMATEMPRLKALRDRLYNGLKDIEETYVNGSMEHRVDSNLNISFNYVEGESLMMALRDIAVSSGSACTSASLEPSYVLRALGLNDELAHSSIRFTVGRYTTEEEIDYTIELVKSAVKKLRELSPLWDMFKEGVDMSKIEWSAH.

Residues 75-76, Asn-155, Gln-183, and 203-205 each bind pyridoxal 5'-phosphate; these read AT and SGH. Lys-206 carries the post-translational modification N6-(pyridoxal phosphate)lysine. Residue Thr-243 participates in pyridoxal 5'-phosphate binding. Cys-328 functions as the Cysteine persulfide intermediate in the catalytic mechanism. Cys-328 lines the [2Fe-2S] cluster pocket.

Belongs to the class-V pyridoxal-phosphate-dependent aminotransferase family. NifS/IscS subfamily. Homodimer. Forms a heterotetramer with IscU, interacts with other sulfur acceptors. Pyridoxal 5'-phosphate is required as a cofactor.

The protein resides in the cytoplasm. It catalyses the reaction (sulfur carrier)-H + L-cysteine = (sulfur carrier)-SH + L-alanine. The protein operates within cofactor biosynthesis; iron-sulfur cluster biosynthesis. In terms of biological role, master enzyme that delivers sulfur to a number of partners involved in Fe-S cluster assembly, tRNA modification or cofactor biosynthesis. Catalyzes the removal of elemental sulfur atoms from cysteine to produce alanine. Functions as a sulfur delivery protein for Fe-S cluster synthesis onto IscU, an Fe-S scaffold assembly protein, as well as other S acceptor proteins. This Actinobacillus succinogenes (strain ATCC 55618 / DSM 22257 / CCUG 43843 / 130Z) protein is Cysteine desulfurase IscS.